Consider the following 315-residue polypeptide: Uracil-DNA glycosylase (315 aa).

Over residues 35-80 the composition is skewed to low complexity; the sequence is AAAAAPAGAGAGASKPARPPAAARPAKGTPAASAATTATGADASAP. The disordered stretch occupies residues 35-88; it reads AAAAAPAGAGAGASKPARPPAAARPAKGTPAASAATTATGADASAPAPDPGAPT. The active-site Proton acceptor is Asp158.

The protein belongs to the uracil-DNA glycosylase (UDG) superfamily. UNG family.

Its subcellular location is the host nucleus. The catalysed reaction is Hydrolyzes single-stranded DNA or mismatched double-stranded DNA and polynucleotides, releasing free uracil.. Functionally, excises uracil residues from the DNA which can arise as a result of misincorporation of dUMP residues by DNA polymerase or deamination of cytosines. Therefore may reduce deleterious uracil incorporation into the viral genome, particularly in terminally differentiated cells which lack DNA repair enzymes. The protein is Uracil-DNA glycosylase (UL2) of Suid herpesvirus 1 (strain Indiana-Funkhauser / Becker) (SuHV-1).